Consider the following 349-residue polypeptide: 4-hydroxythreonine-4-phosphate dehydrogenase (349 aa).

T136 provides a ligand contact to substrate. A divalent metal cation-binding residues include H171, H216, and H281. Residues K289, N298, and R307 each coordinate substrate.

Belongs to the PdxA family. Homodimer. The cofactor is a divalent metal cation.

The protein localises to the cytoplasm. The catalysed reaction is 4-(phosphooxy)-L-threonine + NAD(+) = 3-amino-2-oxopropyl phosphate + CO2 + NADH. Its pathway is cofactor biosynthesis; pyridoxine 5'-phosphate biosynthesis; pyridoxine 5'-phosphate from D-erythrose 4-phosphate: step 4/5. Functionally, catalyzes the NAD(P)-dependent oxidation of 4-(phosphooxy)-L-threonine (HTP) into 2-amino-3-oxo-4-(phosphooxy)butyric acid which spontaneously decarboxylates to form 3-amino-2-oxopropyl phosphate (AHAP). This is 4-hydroxythreonine-4-phosphate dehydrogenase from Synechocystis sp. (strain ATCC 27184 / PCC 6803 / Kazusa).